The following is a 360-amino-acid chain: tRNA (guanine-N(7)-)-methyltransferase (360 aa).

Residues M1–E32 are disordered. Residues G99 and E122–I123 each bind S-adenosyl-L-methionine. The segment at A177–V196 is disordered. The span at V183–V196 shows a compositional bias: polar residues. S-adenosyl-L-methionine-binding positions include N209–T210 and C229. Residue D232 is part of the active site. S-adenosyl-L-methionine is bound at residue T332 to E334.

This sequence belongs to the class I-like SAM-binding methyltransferase superfamily. TrmB family. As to quaternary structure, forms a complex with trm82.

The protein localises to the nucleus. It carries out the reaction guanosine(46) in tRNA + S-adenosyl-L-methionine = N(7)-methylguanosine(46) in tRNA + S-adenosyl-L-homocysteine. It participates in tRNA modification; N(7)-methylguanine-tRNA biosynthesis. Functionally, catalyzes the formation of N(7)-methylguanine at position 46 (m7G46) in tRNA. The protein is tRNA (guanine-N(7)-)-methyltransferase (trm8) of Neosartorya fischeri (strain ATCC 1020 / DSM 3700 / CBS 544.65 / FGSC A1164 / JCM 1740 / NRRL 181 / WB 181) (Aspergillus fischerianus).